Reading from the N-terminus, the 1407-residue chain is Transcription initiation factor TFIID subunit 2 (1407 aa).

Phosphothreonine is present on residues Thr158 and Thr161. Ser163 is modified (phosphoserine). The interval 252–336 (KLIGQNGEES…EERRNIEESN (85 aa)) is disordered. Residues 277–307 (GKPARVIKDEDKDSNLKNDEEGKNSKSKDAQ) are compositionally biased toward basic and acidic residues. Positions 304 to 337 (KDAQDNDEEEEEGESDEEEEEGEEERRNIEESNN) form a coiled coil. The segment covering 308-326 (DNDEEEEEGESDEEEEEGE) has biased composition (acidic residues). Ser318 is modified (phosphoserine). The segment at 1285-1350 (EEGKLDIVIK…KVTSKQRKVK (66 aa)) is highly charged.

Belongs to the TAF2 family. The 1.2 MDa TFIID complex is composed of TATA binding protein (TBP) and the 14 TBP-associated factors. One copy of each TAF1, TAF2, TAF3, TAF7, TAF8, TAF11, TAF13, two copies of each TAF4, TAF5, TAF6, TAF9, TAF10, TAF12, and three copies of TAF14.

It is found in the nucleus. Functionally, functions as a component of the DNA-binding general transcription factor complex TFIID. Binding of TFIID to a promoter (with or without TATA element) is the initial step in pre-initiation complex (PIC) formation. TFIID plays a key role in the regulation of gene expression by RNA polymerase II through different activities such as transcription activator interaction, core promoter recognition and selectivity, TFIIA and TFIIB interaction, chromatin modification (histone acetylation by TAF1), facilitation of DNA opening and initiation of transcription. This Saccharomyces cerevisiae (strain ATCC 204508 / S288c) (Baker's yeast) protein is Transcription initiation factor TFIID subunit 2 (TAF2).